The primary structure comprises 363 residues: Protein-arginine kinase (363 aa).

A Phosphagen kinase C-terminal domain is found at 24 to 254 (IVLSSRIRLA…AQLIEQERSA (231 aa)). ATP is bound by residues 27–31 (SSRIR), His-92, Arg-125, 176–180 (RASVM), and 207–212 (RGIYGE). The short motif at 337 to 342 (RDARRA) is the RDXXRA motif of the pArg binding pocket involved in allosteric regulation element.

This sequence belongs to the ATP:guanido phosphotransferase family.

The catalysed reaction is L-arginyl-[protein] + ATP = N(omega)-phospho-L-arginyl-[protein] + ADP + H(+). With respect to regulation, appears to be allosterically activated by the binding of pArg-containing polypeptides to the pArg-binding pocket localized in the C-terminal domain of McsB. Functionally, catalyzes the specific phosphorylation of arginine residues in a large number of proteins. Is part of the bacterial stress response system. Protein arginine phosphorylation has a physiologically important role and is involved in the regulation of many critical cellular processes, such as protein homeostasis, motility, competence, and stringent and stress responses, by regulating gene expression and protein activity. This chain is Protein-arginine kinase, found in Bacillus velezensis (strain DSM 23117 / BGSC 10A6 / LMG 26770 / FZB42) (Bacillus amyloliquefaciens subsp. plantarum).